We begin with the raw amino-acid sequence, 484 residues long: MDYNMDYAPHEVISQQGERFVDKYVDRKILKNKKSLLVIISLSVLSVVGFVLFYFTPNSRKSDLFKNSSVENNNDDYIINSLLKSPNGKKFIVSKIDEALSFYDSKKNDINKYNEGNNNNNADFKGLSLFKENTPSNNFIHNKDYFINFFDNKFLMNNAEHINQFYMFIKTNNKQYNSPNEMKERFQVFLQNAHKVNMHNNNKNSLYKKELNRFADLTYHEFKNKYLSLRSSKPLKNSKYLLDQMNYEEVIKKYKGNENFDHAAYDWRLHSGVTPVKDQKNCGSCWAFSSIGSVESQYAIRKNKLITLSEQELVDCSFKNYGCNGGLINNAFEDMIELGGICTDDDYPYVSDAPNLCNIDRCTEKYGIKNYLSVPDNKLKEALRFLGPISISVAVSDDFAFYKEGIFDGECGDQLNHAVMLVGFGMKEIVNPLTKKGEKHYYYIIKNSWGQQWGERGFINIETDESGLMRKCGLGTDAFIPLIE.

Residues 1-35 (MDYNMDYAPHEVISQQGERFVDKYVDRKILKNKKS) lie on the Cytoplasmic side of the membrane. Residues 1–243 (MDYNMDYAPH…PLKNSKYLLD (243 aa)) constitute a propeptide, activation peptide. The short motif at 16–25 (QGERFVDKYV) is the Bipartite vacuolar targeting signal 1 element. The chain crosses the membrane as a helical; Signal-anchor for type II membrane protein span at residues 36 to 56 (LLVIISLSVLSVVGFVLFYFT). Residues 57 to 484 (PNSRKSDLFK…GTDAFIPLIE (428 aa)) lie on the Lumenal side of the membrane. Asn-67 carries N-linked (GlcNAc...) asparagine glycosylation. A Bipartite vacuolar targeting signal 2 motif is present at residues 84-105 (KSPNGKKFIVSKIDEALSFYDS). The Nose motif; required for the correct folding of the mature form signature appears at 244–260 (QMNYEEVIKKYKGNENF). Intrachain disulfides connect Cys-282-Cys-323, Cys-316-Cys-357, Cys-342-Cys-362, and Cys-411-Cys-472. Cys-285 is a catalytic residue. The active site involves His-417. The Arm motif; binds to host hemoglobin and required for the inhibitory interaction between the propeptide and the catalytic domain motif lies at 428–437 (EIVNPLTKKG). Residue Asn-447 is part of the active site.

It belongs to the peptidase C1 family. As to quaternary structure, component of the hemozoin formation complex (HFC) composed of falcipains FP2A and/or FP2B, plasmepsins PMII, PMIII/HAP and PMIV, heme detoxifying protein HDP and falcilysin FLN. The HFC complex is involved in hemoglobin degradation and detoxification of heme in the food vacuole during the asexual blood stage. In terms of processing, auto-cleaved to remove the propeptide.

It is found in the vacuole. The protein resides in the membrane. Its activity is regulated as follows. Inhibited by cysteine protease inhibitor ICP. Inhibited by heme and heme analogs. Cysteine protease which cleaves native host hemoglobin and globin in the food vacuole during the asexual blood stage. The binding to host hemoglobin is pH-sensitive and only occurs at acidic pH. Cleaves ankyrin and protein 4.1, two components of host erythrocyte membrane cytoskeleton required for the stability of the erythrocyte membrane, and thus may be involved in parasite release. Preferentially cleaves substrates which have an arginine or lysine at the P1 position and a leucine or phenylalanine at the P2 position. In Plasmodium falciparum (isolate 3D7), this protein is Falcipain-2a.